We begin with the raw amino-acid sequence, 378 residues long: Chorismate synthase (378 aa).

A disordered region spans residues Glu-37–Glu-60. Arg-47 lines the NADP(+) pocket. Residues Arg-124 to Ser-126, Gly-289, Lys-304 to Thr-308, and Arg-330 contribute to the FMN site.

Belongs to the chorismate synthase family. As to quaternary structure, homotetramer. It depends on FMNH2 as a cofactor.

The catalysed reaction is 5-O-(1-carboxyvinyl)-3-phosphoshikimate = chorismate + phosphate. It participates in metabolic intermediate biosynthesis; chorismate biosynthesis; chorismate from D-erythrose 4-phosphate and phosphoenolpyruvate: step 7/7. Catalyzes the anti-1,4-elimination of the C-3 phosphate and the C-6 proR hydrogen from 5-enolpyruvylshikimate-3-phosphate (EPSP) to yield chorismate, which is the branch point compound that serves as the starting substrate for the three terminal pathways of aromatic amino acid biosynthesis. This reaction introduces a second double bond into the aromatic ring system. The sequence is that of Chorismate synthase from Leptospira biflexa serovar Patoc (strain Patoc 1 / Ames).